The following is a 65-amino-acid chain: Large ribosomal subunit protein bL33c (65 aa).

It belongs to the bacterial ribosomal protein bL33 family.

The protein localises to the plastid. The protein resides in the chloroplast. The polypeptide is Large ribosomal subunit protein bL33c (rpl33) (Porphyra purpurea (Red seaweed)).